A 352-amino-acid chain; its full sequence is Adenosine deaminase (352 aa).

Zn(2+) contacts are provided by H24 and H26. H26, D28, and G181 together coordinate substrate. H208 is a binding site for Zn(2+). E211 serves as the catalytic Proton donor. A Zn(2+)-binding site is contributed by D290.

The protein belongs to the metallo-dependent hydrolases superfamily. Adenosine and AMP deaminases family. Adenosine deaminase subfamily. Requires Zn(2+) as cofactor.

The enzyme catalyses adenosine + H2O + H(+) = inosine + NH4(+). It carries out the reaction 2'-deoxyadenosine + H2O + H(+) = 2'-deoxyinosine + NH4(+). In terms of biological role, catalyzes the hydrolytic deamination of adenosine and 2-deoxyadenosine. The sequence is that of Adenosine deaminase from Lactococcus lactis subsp. lactis (strain IL1403) (Streptococcus lactis).